Consider the following 918-residue polypeptide: Glutamate receptor ionotropic, kainate 1 (918 aa).

The signal sequence occupies residues 1–30; sequence MELGTLLAQPGLWTRDTSWALLYFLCYILP. Topologically, residues 31–576 are extracellular; it reads QTAPQVLRIG…VFSFLNPLSP (546 aa). N-linked (GlcNAc...) asparagine glycans are attached at residues Asn68, Asn74, Asn276, Asn379, Asn428, Asn439, and Asn446. 3 residues coordinate L-glutamate: Pro531, Thr533, and Arg538. Asn561 carries N-linked (GlcNAc...) asparagine glycosylation. A helical membrane pass occupies residues 577-597; that stretch reads DIWMYVLLACLGVSCVLFVIA. Topologically, residues 598–653 are cytoplasmic; that stretch reads RFTPYEWYNPHPCNPDSDVVENNFTLLNSFWFGVGALMQQGSELMPKALSTRIVGG. A helical membrane pass occupies residues 654–674; the sequence is IWWFFTLIIISSYTANLAAFL. Residues 675-834 lie on the Extracellular side of the membrane; it reads TVERMESPID…KEASALGVEN (160 aa). Residues Ser704 and Thr705 each coordinate L-glutamate. Ser725 is modified (phosphoserine; by PKC). Residue Glu753 participates in L-glutamate binding. Thr761 is modified (phosphothreonine; by PKC). A disulfide bridge links Cys765 with Cys819. Asn766 carries an N-linked (GlcNAc...) asparagine glycan. A helical membrane pass occupies residues 835–855; that stretch reads IGGIFIVLAAGLVLSVFVAIG. At 856–918 the chain is on the cytoplasmic side; that stretch reads EFIYKSRKNN…IRKQSSVHTV (63 aa).

This sequence belongs to the glutamate-gated ion channel (TC 1.A.10.1) family. GRIK1 subfamily. Homotetramer or heterotetramer of pore-forming glutamate receptor subunits. Tetramers may be formed by the dimerization of dimers. Can form functional heteromeric receptors with GRIK4 and GRIK5. Interacts with KLHL17.

The protein resides in the cell membrane. It localises to the postsynaptic cell membrane. The catalysed reaction is Ca(2+)(in) = Ca(2+)(out). In terms of biological role, ionotropic glutamate receptor that functions as a cation-permeable ligand-gated ion channel, gated by L-glutamate and the glutamatergic agonist kainic acid. L-glutamate acts as an excitatory neurotransmitter at many synapses in the central nervous system. Binding of the excitatory neurotransmitter L-glutamate induces a conformation change, leading to the opening of the cation channel, and thereby converts the chemical signal to an electrical impulse. The receptor then desensitizes rapidly and enters a transient inactive state, characterized by the presence of bound agonist. The sequence is that of Glutamate receptor ionotropic, kainate 1 (GRIK1) from Macaca fascicularis (Crab-eating macaque).